We begin with the raw amino-acid sequence, 925 residues long: Calpain-B (925 aa).

The region spanning 259–558 is the Calpain catalytic domain; it reads MFEDPDFPAT…FDRVEICNLS (300 aa). Active-site residues include Cys-314, His-470, and Asn-498. The domain III stretch occupies residues 559 to 728; it reads PDSLTEDQQH…TRNNMEENDD (170 aa). Residues 723–753 form a disordered region; it reads MEENDDEVGFGETDDRIAPSLPPPTPKEEDD. Residues 729 to 748 are linker; sequence EVGFGETDDRIAPSLPPPTP. The segment at 749 to 925 is domain IV; the sequence is KEEDDPQRIA…DDWLERTIYS (177 aa). EF-hand domains lie at 796–831 and 826–861; these read FSKDAVRSMVAMLDKDRSGRLGFEEFEALLTDIAKW and TDIAKWRAVFKLYDTRRTGSIDGFHLRGALNSAGYH. Asp-809, Asp-811, Ser-813, Arg-815, Glu-820, Asp-839, Thr-843, Ser-845, and His-850 together coordinate Ca(2+).

This sequence belongs to the peptidase C2 family. Undergoes calcium-dependent autolytic cleavage between Asn-74 and Ala-75 and between Gln-224 and Asn-225 to produce two major products, calpain B catalytic subunit 1 and calpain B catalytic subunit 2. This autolysis is necessary for activation of the protein. As to expression, strongly expressed in follicular and border cells of the oocyte. Ubiquitously expressed in early embryos. Localized to the trachea and their orifices, and to the larynx of late embryos. Restricted to the salivary gland in third instar larvae.

The protein localises to the cytoplasm. Its subcellular location is the membrane. With respect to regulation, activated by millimolar concentrations of calcium. Its function is as follows. Calcium-regulated non-lysosomal thiol-protease. This chain is Calpain-B, found in Drosophila melanogaster (Fruit fly).